The primary structure comprises 82 residues: uncharacterized protein (82 aa).

Positions 60 to 82 are disordered; sequence YKRRRPDHMMKRNSPSYTGDHKT.

This is an uncharacterized protein from Saccharomyces cerevisiae (strain ATCC 204508 / S288c) (Baker's yeast).